The sequence spans 195 residues: CD70 antigen (195 aa).

Over 1–23 the chain is Cytoplasmic; that stretch reads MPEEGRPCPWVRWSGTAFQRQWP. The chain crosses the membrane as a helical; Signal-anchor for type II membrane protein span at residues 24–44; that stretch reads WLLLVVFITVFCCWFHCSGLL. Over 45 to 195 the chain is Extracellular; sequence SKQQQRLLEH…TFFGVQWICP (151 aa). A THD domain is found at 58-193; the sequence is HTAELQLNLT…DETFFGVQWI (136 aa). N-linked (GlcNAc...) asparagine glycans are attached at residues Asn-65 and Asn-116. 2 cysteine pairs are disulfide-bonded: Cys-117-Cys-153 and Cys-135-Cys-170. N-linked (GlcNAc...) asparagine glycosylation occurs at Asn-172.

It belongs to the tumor necrosis factor family. In terms of assembly, homotrimer. N-glycosylated. As to expression, very low level of expression. Detected in splenocytes and thymocytes.

The protein localises to the cell membrane. Functionally, expressed at the plasma membrane of B cells, it is the ligand of the CD27 receptor which is specifically expressed at the surface of T cells. The CD70-CD27 signaling pathway mediates antigen-specific T cell activation and expansion which in turn provides immune surveillance of B cells. In Mus musculus (Mouse), this protein is CD70 antigen.